A 141-amino-acid chain; its full sequence is Hemoglobin subunit alpha (141 aa).

Positions 1 to 141 (VLSSKDKTNV…VSTVLTSKYR (141 aa)) constitute a Globin domain. A Phosphoserine modification is found at Ser3. An N6-succinyllysine modification is found at Lys7. Thr8 is subject to Phosphothreonine. Lys11 carries the post-translational modification N6-succinyllysine. Lys16 is subject to N6-acetyllysine; alternate. The residue at position 16 (Lys16) is an N6-succinyllysine; alternate. Phosphotyrosine is present on Tyr24. At Lys40 the chain carries N6-succinyllysine. The residue at position 49 (Ser49) is a Phosphoserine. His58 serves as a coordination point for O2. Residue His87 participates in heme b binding. Phosphoserine is present on Ser102. Phosphothreonine is present on Thr108. Ser124 bears the Phosphoserine mark. Thr134 and Thr137 each carry phosphothreonine. Ser138 is modified (phosphoserine).

This sequence belongs to the globin family. In terms of assembly, heterotetramer of two alpha chains and two beta chains. As to expression, red blood cells.

Its function is as follows. Involved in oxygen transport from the lung to the various peripheral tissues. Functionally, hemopressin acts as an antagonist peptide of the cannabinoid receptor CNR1. Hemopressin-binding efficiently blocks cannabinoid receptor CNR1 and subsequent signaling. The chain is Hemoglobin subunit alpha (HBA) from Camelus dromedarius (Dromedary).